Here is a 160-residue protein sequence, read N- to C-terminus: SsrA-binding protein (160 aa).

The protein belongs to the SmpB family.

The protein resides in the cytoplasm. Functionally, required for rescue of stalled ribosomes mediated by trans-translation. Binds to transfer-messenger RNA (tmRNA), required for stable association of tmRNA with ribosomes. tmRNA and SmpB together mimic tRNA shape, replacing the anticodon stem-loop with SmpB. tmRNA is encoded by the ssrA gene; the 2 termini fold to resemble tRNA(Ala) and it encodes a 'tag peptide', a short internal open reading frame. During trans-translation Ala-aminoacylated tmRNA acts like a tRNA, entering the A-site of stalled ribosomes, displacing the stalled mRNA. The ribosome then switches to translate the ORF on the tmRNA; the nascent peptide is terminated with the 'tag peptide' encoded by the tmRNA and targeted for degradation. The ribosome is freed to recommence translation, which seems to be the essential function of trans-translation. The polypeptide is SsrA-binding protein (Erwinia tasmaniensis (strain DSM 17950 / CFBP 7177 / CIP 109463 / NCPPB 4357 / Et1/99)).